A 449-amino-acid polypeptide reads, in one-letter code: UDP-N-acetylmuramate--L-alanine ligase (449 aa).

ATP is bound at residue 118 to 124 (GTHGKTT).

It belongs to the MurCDEF family.

Its subcellular location is the cytoplasm. It carries out the reaction UDP-N-acetyl-alpha-D-muramate + L-alanine + ATP = UDP-N-acetyl-alpha-D-muramoyl-L-alanine + ADP + phosphate + H(+). It functions in the pathway cell wall biogenesis; peptidoglycan biosynthesis. Its function is as follows. Cell wall formation. The chain is UDP-N-acetylmuramate--L-alanine ligase from Flavobacterium johnsoniae (strain ATCC 17061 / DSM 2064 / JCM 8514 / BCRC 14874 / CCUG 350202 / NBRC 14942 / NCIMB 11054 / UW101) (Cytophaga johnsonae).